The following is a 355-amino-acid chain: Phosphoribosylformylglycinamidine cyclo-ligase (355 aa).

It belongs to the AIR synthase family.

It is found in the cytoplasm. It carries out the reaction 2-formamido-N(1)-(5-O-phospho-beta-D-ribosyl)acetamidine + ATP = 5-amino-1-(5-phospho-beta-D-ribosyl)imidazole + ADP + phosphate + H(+). It functions in the pathway purine metabolism; IMP biosynthesis via de novo pathway; 5-amino-1-(5-phospho-D-ribosyl)imidazole from N(2)-formyl-N(1)-(5-phospho-D-ribosyl)glycinamide: step 2/2. The sequence is that of Phosphoribosylformylglycinamidine cyclo-ligase from Paraburkholderia xenovorans (strain LB400).